We begin with the raw amino-acid sequence, 153 residues long: Large ribosomal subunit protein uL22 (153 aa).

Belongs to the universal ribosomal protein uL22 family. In terms of assembly, part of the 50S ribosomal subunit.

In terms of biological role, this protein binds specifically to 23S rRNA. It makes multiple contacts with different domains of the 23S rRNA in the assembled 50S subunit and ribosome. The globular domain of the protein is located near the polypeptide exit tunnel on the outside of the subunit, while an extended beta-hairpin is found that lines the wall of the exit tunnel in the center of the 70S ribosome. This is Large ribosomal subunit protein uL22 from Methanocella arvoryzae (strain DSM 22066 / NBRC 105507 / MRE50).